The primary structure comprises 506 residues: Histidine ammonia-lyase (506 aa).

A cross-link (5-imidazolinone (Ala-Gly)) is located at residues 143–145; the sequence is ASG. Serine 144 bears the 2,3-didehydroalanine (Ser) mark.

This sequence belongs to the PAL/histidase family. Post-translationally, contains an active site 4-methylidene-imidazol-5-one (MIO), which is formed autocatalytically by cyclization and dehydration of residues Ala-Ser-Gly.

The protein localises to the cytoplasm. The catalysed reaction is L-histidine = trans-urocanate + NH4(+). It functions in the pathway amino-acid degradation; L-histidine degradation into L-glutamate; N-formimidoyl-L-glutamate from L-histidine: step 1/3. This is Histidine ammonia-lyase from Salmonella agona (strain SL483).